Consider the following 272-residue polypeptide: Dermonecrotic toxin SpeSicTox-betaIB1a (272 aa).

The active site involves His-5. Residues Glu-25 and Asp-27 each coordinate Mg(2+). His-41 (nucleophile) is an active-site residue. Cystine bridges form between Cys-45-Cys-51 and Cys-47-Cys-191. Mg(2+) is bound at residue Asp-85.

Belongs to the arthropod phospholipase D family. Class II subfamily. The cofactor is Mg(2+). Expressed by the venom gland.

Its subcellular location is the secreted. It catalyses the reaction an N-(acyl)-sphingosylphosphocholine = an N-(acyl)-sphingosyl-1,3-cyclic phosphate + choline. It carries out the reaction an N-(acyl)-sphingosylphosphoethanolamine = an N-(acyl)-sphingosyl-1,3-cyclic phosphate + ethanolamine. The catalysed reaction is a 1-acyl-sn-glycero-3-phosphocholine = a 1-acyl-sn-glycero-2,3-cyclic phosphate + choline. The enzyme catalyses a 1-acyl-sn-glycero-3-phosphoethanolamine = a 1-acyl-sn-glycero-2,3-cyclic phosphate + ethanolamine. Its function is as follows. Dermonecrotic toxins cleave the phosphodiester linkage between the phosphate and headgroup of certain phospholipids (sphingolipid and lysolipid substrates), forming an alcohol (often choline) and a cyclic phosphate. This toxin acts on sphingomyelin (SM). It may also act on ceramide phosphoethanolamine (CPE), lysophosphatidylcholine (LPC) and lysophosphatidylethanolamine (LPE), but not on lysophosphatidylserine (LPS), and lysophosphatidylglycerol (LPG). It acts by transphosphatidylation, releasing exclusively cyclic phosphate products as second products. Induces dermonecrosis, hemolysis, increased vascular permeability, edema, inflammatory response, and platelet aggregation. The chain is Dermonecrotic toxin SpeSicTox-betaIB1a from Sicarius peruensis (Six-eyed sand spider).